Reading from the N-terminus, the 337-residue chain is Protein-methionine-sulfoxide reductase catalytic subunit MsrP (337 aa).

Residues 1-50 constitute a signal peptide (tat-type signal); that stretch reads MLIKLPSASGSKESDVTPESIYLSRRTLLASSLAGLAVTALPRWASAADA. Residues Asn-94, 97 to 98, Cys-152, Thr-187, Asn-237, Arg-242, and 253 to 255 each bind Mo-molybdopterin; these read YE and SVK.

Belongs to the MsrP family. In terms of assembly, heterodimer of a catalytic subunit (MsrP) and a heme-binding subunit (MsrQ). Mo-molybdopterin serves as cofactor. In terms of processing, predicted to be exported by the Tat system. The position of the signal peptide cleavage has not been experimentally proven.

It is found in the periplasm. It catalyses the reaction L-methionyl-[protein] + a quinone + H2O = L-methionyl-(S)-S-oxide-[protein] + a quinol. The catalysed reaction is L-methionyl-[protein] + a quinone + H2O = L-methionyl-(R)-S-oxide-[protein] + a quinol. Functionally, part of the MsrPQ system that repairs oxidized periplasmic proteins containing methionine sulfoxide residues (Met-O), using respiratory chain electrons. Thus protects these proteins from oxidative-stress damage caused by reactive species of oxygen and chlorine generated by the host defense mechanisms. MsrPQ is essential for the maintenance of envelope integrity under bleach stress, rescuing a wide series of structurally unrelated periplasmic proteins from methionine oxidation. The catalytic subunit MsrP is non-stereospecific, being able to reduce both (R-) and (S-) diastereoisomers of methionine sulfoxide. The sequence is that of Protein-methionine-sulfoxide reductase catalytic subunit MsrP from Pseudomonas syringae pv. tomato (strain ATCC BAA-871 / DC3000).